The sequence spans 333 residues: MDSEAVSSDSHVAAAIATRRRSNSVSDDYSVQRTNDDATQCKYFATQKGYWKDEFISRFANSSSNVSEARRFPEISMGYWARTAAIEKYVRDFLNEFDGNAQVVSLGCGFDTLFWRLVSSGAKLVKYVEVDFSSVTSKKIRHILKPIGPNSVDLKKSFESDAVVSHHADLHAGNYHLIGADLRQANELDQKLATCQLSHDIPTIFIAECVLVYMSADSSTALLKQIVSQFKQPAFVNYEQFRTSDAFTKVMEQNLGDRGIQLHGLEMCESAEKQEERFRNAGFKEVKVMDMNQIFNNFLDQKEVSRIREIEMLDEMELLQQLFAHYCVVSARI.

S-adenosyl-L-methionine-binding positions include K42, R82, G107, D131, 181–182, and E208; that span reads DL.

It belongs to the methyltransferase superfamily. LCMT family.

It carries out the reaction [phosphatase 2A protein]-C-terminal L-leucine + S-adenosyl-L-methionine = [phosphatase 2A protein]-C-terminal L-leucine methyl ester + S-adenosyl-L-homocysteine. Functionally, methylates the carboxyl group of the C-terminal leucine residue of protein phosphatase 2A catalytic subunits to form alpha-leucine ester residues. The chain is Leucine carboxyl methyltransferase 1 from Caenorhabditis elegans.